The chain runs to 518 residues: Nuclear receptor ROR-gamma (518 aa).

Positions 1–30 (MDRAPQRQHRASRELLAAKKTHTSQIEVIP) are modulating. 2 NR C4-type zinc fingers span residues 31 to 51 (CKICGDKSSGIHYGVITCEGC) and 67 to 91 (CTRQQNCPIDRTSRNRCQHCRLQKC). Residues 31-96 (CKICGDKSSG…RLQKCLALGM (66 aa)) constitute a DNA-binding region (nuclear receptor). 2 disordered regions span residues 105–183 (RMSK…SGSG) and 238–258 (HPGLGELGQGPDSYGSPSFRS). Residues 109-118 (KQRDSLHAEV) show a composition bias toward basic and acidic residues. Low complexity predominate over residues 119–130 (QKQLQQRQQQQQ). Residues 269-508 (EIEHLVQSVC…PPLYKELFST (240 aa)) enclose the NR LBD domain. The AF-2 motif lies at 501–506 (LYKELF).

Belongs to the nuclear hormone receptor family. NR1 subfamily. Interacts (via AF-2 motif) with the coactivator NCOA2 (via LXXLL motif). Interacts with the corepressor NCOR1. Interacts with CRY1. Interacts (via AF-2 motif) with the coactivators NCOA1 and PPARGC1A (via LXXLL motif). Interacts (via AF-2 motif) with PROX1. Interacts with FOXP3. Interacts with NR0B2. In terms of tissue distribution, isoform 1 is widely expressed in many tissues, including liver and adipose, and highly expressed in skeletal muscle. Isoform 2 is primarily expressed in immature thymocytes.

It localises to the nucleus. Nuclear receptor that binds DNA as a monomer to ROR response elements (RORE) containing a single core motif half-site 5'-AGGTCA-3' preceded by a short A-T-rich sequence. Key regulator of cellular differentiation, immunity, peripheral circadian rhythm as well as lipid, steroid, xenobiotics and glucose metabolism. Considered to have intrinsic transcriptional activity, have some natural ligands like oxysterols that act as agonists (25-hydroxycholesterol) or inverse agonists (7-oxygenated sterols), enhancing or repressing the transcriptional activity, respectively. Recruits distinct combinations of cofactors to target gene regulatory regions to modulate their transcriptional expression, depending on the tissue, time and promoter contexts. Regulates the circadian expression of clock genes such as CRY1, BMAL1 and NR1D1 in peripheral tissues and in a tissue-selective manner. Competes with NR1D1 for binding to their shared DNA response element on some clock genes such as BMAL1, CRY1 and NR1D1 itself, resulting in NR1D1-mediated repression or RORC-mediated activation of the expression, leading to the circadian pattern of clock genes expression. Therefore influences the period length and stability of the clock. Involved in the regulation of the rhythmic expression of genes involved in glucose and lipid metabolism, including PLIN2 and AVPR1A. Negative regulator of adipocyte differentiation through the regulation of early phase genes expression, such as MMP3. Controls adipogenesis as well as adipocyte size and modulates insulin sensitivity in obesity. In liver, has specific and redundant functions with RORA as positive or negative modulator of expression of genes encoding phase I and Phase II proteins involved in the metabolism of lipids, steroids and xenobiotics, such as SULT1E1. Also plays a role in the regulation of hepatocyte glucose metabolism through the regulation of G6PC1 and PCK1. Regulates the rhythmic expression of PROX1 and promotes its nuclear localization. Plays an indispensable role in the induction of IFN-gamma dependent anti-mycobacterial systemic immunity. Its function is as follows. Essential for thymopoiesis and the development of several secondary lymphoid tissues, including lymph nodes and Peyer's patches. Required for the generation of LTi (lymphoid tissue inducer) cells. Regulates thymocyte survival through DNA-binding on ROREs of target gene promoter regions and recruitment of coactivaros via the AF-2. Also plays a key role, downstream of IL6 and TGFB and synergistically with RORA, for lineage specification of uncommitted CD4(+) T-helper (T(H)) cells into T(H)17 cells, antagonizing the T(H)1 program. Probably regulates IL17 and IL17F expression on T(H) by binding to the essential enhancer conserved non-coding sequence 2 (CNS2) in the IL17-IL17F locus. May also play a role in the pre-TCR activation cascade leading to the maturation of alpha/beta T-cells and may participate in the regulation of DNA accessibility in the TCR-J(alpha) locus. This Homo sapiens (Human) protein is Nuclear receptor ROR-gamma (RORC).